The sequence spans 516 residues: Putative protein NRT1/ PTR FAMILY 2.2 (516 aa).

Helical transmembrane passes span 31 to 51 (TLLG…VFLI), 67 to 87 (IVNG…DSFF), 90 to 110 (IPVI…LTMI), 138 to 158 (ILYI…FTLA), 174 to 194 (FFNW…TAIV), 201 to 221 (SWKL…IVFV), 320 to 340 (LLLA…LIIL), 362 to 382 (VIVI…VYPM), 394 to 414 (LQKV…SAIV), 437 to 457 (FIAS…ITLI), and 476 to 496 (VYWL…AWFY).

It belongs to the major facilitator superfamily. Proton-dependent oligopeptide transporter (POT/PTR) (TC 2.A.17) family. In terms of tissue distribution, not detected.

Its subcellular location is the membrane. Its function is as follows. Transporter involved in a passive nitrate efflux. In Arabidopsis thaliana (Mouse-ear cress), this protein is Putative protein NRT1/ PTR FAMILY 2.2 (NPF2.2).